The primary structure comprises 332 residues: D-lactate dehydrogenase (332 aa).

Residues 155 to 156, D175, 206 to 207, N212, 233 to 235, and D259 contribute to the NAD(+) site; these read RI, VP, and FAR. The active site involves R235. E264 is an active-site residue. Catalysis depends on H296, which acts as the Proton donor.

Belongs to the D-isomer specific 2-hydroxyacid dehydrogenase family.

It catalyses the reaction (R)-lactate + NAD(+) = pyruvate + NADH + H(+). The chain is D-lactate dehydrogenase (ldhD) from Lactiplantibacillus plantarum (strain ATCC BAA-793 / NCIMB 8826 / WCFS1) (Lactobacillus plantarum).